Reading from the N-terminus, the 575-residue chain is Muellerian-inhibiting factor (575 aa).

Residues 1-20 (MQGPSLSQLVLVLMGALLEA) form the signal peptide. Residues 21–466 (GTPREEVSST…ERSGPARAQR (446 aa)) constitute a propeptide that is removed on maturation. N-linked (GlcNAc...) asparagine glycosylation is found at Asn78 and Asn343. 3 disulfides stabilise this stretch: Cys477/Cys541, Cys503/Cys572, and Cys507/Cys574.

Belongs to the TGF-beta family. In terms of assembly, homodimer; disulfide-linked. In terms of processing, preproprotein is proteolytically processed to generate N- and C-terminal cleavage products that homodimerize and associate to form a biologically active non-covalent complex. Binding of the non-covalent complex to AMHR2 induces dissociation of the pro-region from the mature C-terminal dimer. The N-terminal portion of the protein, despite having no intrinsic activity, has the role of amplifying the activity of the C-terminus. As to expression, detected in fetal Sertoli cells. Expressed in granulosa cells of growing follicles but also in theca cells of preovulatory follicles and corpora lutea (at protein level).

The protein localises to the secreted. Its function is as follows. Plays an important role in several reproductive functions. Induces Muellerian duct regression during male fetal sexual differentiation and plays a role in Leydig cell differentiation and function. In female acts as a negative regulator of the primordial to primary follicle transition and decreases FSH sensitivity of growing follicles. AMH signals by binding to a specific type-II receptor, AMHR2, that heterodimerizes with type-I receptors (ACVR1 and BMPR1A), and recruiting SMAD proteins that are translocated to the nucleus to regulate target gene expression. The polypeptide is Muellerian-inhibiting factor (AMH) (Sus scrofa (Pig)).